The primary structure comprises 351 residues: Protein Wnt-8a (351 aa).

Positions 1–24 (MGNLFMLWAALGICCAAFSASAWS) are cleaved as a signal peptide. Cysteine 54 and cysteine 65 are joined by a disulfide. Asparagine 103 is a glycosylation site (N-linked (GlcNAc...) asparagine). 10 cysteine pairs are disulfide-bonded: cysteine 104–cysteine 112, cysteine 114–cysteine 132, cysteine 180–cysteine 194, cysteine 182–cysteine 189, cysteine 259–cysteine 297, cysteine 275–cysteine 290, cysteine 294–cysteine 336, cysteine 312–cysteine 327, cysteine 314–cysteine 324, and cysteine 319–cysteine 320. The O-palmitoleoyl serine moiety is linked to residue serine 186. N-linked (GlcNAc...) asparagine glycosylation is found at asparagine 262 and asparagine 281.

It belongs to the Wnt family. In terms of assembly, forms a soluble 1:1 complex with AFM; this prevents oligomerization and is required for prolonged biological activity. The complex with AFM may represent the physiological form in body fluids. In terms of processing, palmitoleoylation is required for efficient binding to frizzled receptors. Depalmitoleoylation leads to Wnt signaling pathway inhibition. Post-translationally, proteolytic processing by TIKI1 and TIKI2 promotes oxidation and formation of large disulfide-bond oligomers, leading to inactivation of WNT8A.

It is found in the secreted. Its subcellular location is the extracellular space. It localises to the extracellular matrix. Functionally, ligand for members of the frizzled family of seven transmembrane receptors. Plays a role in embryonic patterning. The chain is Protein Wnt-8a (WNT8A) from Homo sapiens (Human).